A 535-amino-acid polypeptide reads, in one-letter code: cAMP-regulated D2 protein (535 aa).

The signal sequence occupies residues 1–20; the sequence is MNKLLVFILLLLLLINISFA. A disulfide bridge connects residues Cys-89 and Cys-109. Ser-213 functions as the Acyl-ester intermediate in the catalytic mechanism. Cys-265 and Cys-272 are disulfide-bonded. Active-site charge relay system residues include Glu-338 and His-440. Asn-500 is a glycosylation site (N-linked (GlcNAc...) asparagine).

It belongs to the type-B carboxylesterase/lipase family.

It is found in the cytoplasmic vesicle. The protein localises to the esterosome membrane. This Dictyostelium discoideum (Social amoeba) protein is cAMP-regulated D2 protein (D2).